The sequence spans 48 residues: Small, acid-soluble spore protein O (48 aa).

The disordered stretch occupies residues 1-23; sequence MTKRKANHVINGMNAAKSQGNGA.

The protein belongs to the SspO family.

The protein resides in the spore core. This Bacillus pumilus (strain SAFR-032) protein is Small, acid-soluble spore protein O.